Consider the following 275-residue polypeptide: tRNA pseudouridine synthase B (275 aa).

The Nucleophile role is filled by aspartate 38.

Belongs to the pseudouridine synthase TruB family. Type 1 subfamily.

It carries out the reaction uridine(55) in tRNA = pseudouridine(55) in tRNA. In terms of biological role, responsible for synthesis of pseudouridine from uracil-55 in the psi GC loop of transfer RNAs. The sequence is that of tRNA pseudouridine synthase B from Nitratiruptor sp. (strain SB155-2).